Consider the following 179-residue polypeptide: Inosine/xanthosine triphosphatase (179 aa).

Residue 8–13 coordinates substrate; that stretch reads TTNPAK. Residues aspartate 38 and glutamate 68 each contribute to the Mg(2+) site. Position 68–69 (68–69) interacts with substrate; the sequence is EA.

It belongs to the YjjX NTPase family. As to quaternary structure, homodimer. Mg(2+) is required as a cofactor. The cofactor is Mn(2+).

It carries out the reaction XTP + H2O = XDP + phosphate + H(+). The catalysed reaction is ITP + H2O = IDP + phosphate + H(+). In terms of biological role, phosphatase that hydrolyzes non-canonical purine nucleotides such as XTP and ITP to their respective diphosphate derivatives. Probably excludes non-canonical purines from DNA/RNA precursor pool, thus preventing their incorporation into DNA/RNA and avoiding chromosomal lesions. The polypeptide is Inosine/xanthosine triphosphatase (Proteus mirabilis (strain HI4320)).